The primary structure comprises 423 residues: Proline racemase A (423 aa).

The signal sequence occupies residues 1–31 (MRKSVCPKQKFFFSAFPFFFFFCVFPLISRT). The active-site Proton acceptor is the Cys-160. 161–162 (GH) is a binding site for substrate. Residues Asn-213, Asn-266, and Asn-282 are each glycosylated (N-linked (GlcNAc...) asparagine). Position 326 (Asp-326) interacts with substrate. Cys-330 serves as the catalytic Proton donor. 331–332 (GT) contributes to the substrate binding site.

This sequence belongs to the proline racemase family. As to quaternary structure, homodimer.

The protein localises to the secreted. It is found in the membrane. The protein resides in the cytoplasm. The catalysed reaction is L-proline = D-proline. Inhibited by maleic acid, iodoacetamide, iodoacetate and, most particularly, pyrrole-2-carboxylic acid. In terms of biological role, catalyzes the interconversion of L- and D-proline. Secreted isoform 1 contributes to parasite immune evasion by acting as a B-cell mitogen. Probably involved in parasite differentiation and infectivity. In Trypanosoma cruzi (strain CL Brener), this protein is Proline racemase A (PA45-A).